We begin with the raw amino-acid sequence, 311 residues long: MANPLYQKHIISINDLSRAELELVLETAAKLKANPQPELLKHKVIASCFFEASTRTRLSFETSMHRLGAAVVGFSDSSNTSLGKKGETLADTISVISTYVDAIVMRHPQEGAARLATEFSGGVPVLNAGDGANQHPTQTLLDLFTIQETQGRLENLTIAMVGDLKYGRTVHSLAQALAKFNGNRFCFIAPDALAMPQYILDMLDEKGIPWSLHSAIEDVVQEVDILYMTRVQKERLDPSEYANVKAQFVLRAADLQGARANMKVLHPLPRIDEITTDVDKTPHAWYFQQAGNGIFARQALLALVLNRDLAL.

Arg55 and Thr56 together coordinate carbamoyl phosphate. Lys85 contributes to the L-aspartate binding site. Residues Arg106, His135, and Gln138 each coordinate carbamoyl phosphate. L-aspartate contacts are provided by Arg168 and Arg230. Carbamoyl phosphate-binding residues include Leu268 and Pro269.

Belongs to the aspartate/ornithine carbamoyltransferase superfamily. ATCase family. In terms of assembly, heterododecamer (2C3:3R2) of six catalytic PyrB chains organized as two trimers (C3), and six regulatory PyrI chains organized as three dimers (R2).

The enzyme catalyses carbamoyl phosphate + L-aspartate = N-carbamoyl-L-aspartate + phosphate + H(+). Its pathway is pyrimidine metabolism; UMP biosynthesis via de novo pathway; (S)-dihydroorotate from bicarbonate: step 2/3. Catalyzes the condensation of carbamoyl phosphate and aspartate to form carbamoyl aspartate and inorganic phosphate, the committed step in the de novo pyrimidine nucleotide biosynthesis pathway. This Cronobacter sakazakii (strain ATCC BAA-894) (Enterobacter sakazakii) protein is Aspartate carbamoyltransferase catalytic subunit.